Here is a 186-residue protein sequence, read N- to C-terminus: uncharacterized protein (186 aa).

This is an uncharacterized protein from Trypanosoma brucei brucei.